Reading from the N-terminus, the 302-residue chain is Oxaloacetate decarboxylase 2 (302 aa).

Ser-50 lines the substrate pocket. Asp-88 contacts Mg(2+). The substrate site is built by Arg-159 and His-235.

This sequence belongs to the isocitrate lyase/PEP mutase superfamily. Oxaloacetate decarboxylase family. In terms of assembly, homotetramer; dimer of dimers. Requires Mg(2+) as cofactor.

The enzyme catalyses oxaloacetate + H(+) = pyruvate + CO2. Catalyzes the decarboxylation of oxaloacetate into pyruvate. Seems to play a role in maintaining cellular concentrations of bicarbonate and pyruvate. This Pseudomonas putida (strain W619) protein is Oxaloacetate decarboxylase 2.